The primary structure comprises 62 residues: Guanine nucleotide-binding protein subunit gamma (62 aa).

The segment at 40-62 is disordered; it reads DMLVSGPTDQHNPFQEKKSCSVL. Positions 53-62 are enriched in basic and acidic residues; that stretch reads FQEKKSCSVL. At Cys59 the chain carries Cysteine methyl ester. Cys59 is lipidated: S-geranylgeranyl cysteine. The propeptide at 60-62 is removed in mature form; that stretch reads SVL.

This sequence belongs to the G protein gamma family. As to quaternary structure, g proteins are composed of 3 units, alpha, beta and gamma. Interacts with gpb-1 and gpb-2. As to expression, predominantly expressed in the central nervous system.

It is found in the cell membrane. Guanine nucleotide-binding proteins (G proteins) are involved as a modulator or transducer in various transmembrane signaling systems. The beta and gamma chains are required for the GTPase activity, for replacement of GDP by GTP, and for G protein-effector interaction. The sequence is that of Guanine nucleotide-binding protein subunit gamma (gpc-1) from Caenorhabditis elegans.